A 313-amino-acid chain; its full sequence is Ribosomal RNA small subunit methyltransferase H (313 aa).

S-adenosyl-L-methionine is bound by residues 33 to 35, Glu-52, Phe-80, Asp-101, and Gln-108; that span reads AGH.

The protein belongs to the methyltransferase superfamily. RsmH family.

The protein resides in the cytoplasm. The catalysed reaction is cytidine(1402) in 16S rRNA + S-adenosyl-L-methionine = N(4)-methylcytidine(1402) in 16S rRNA + S-adenosyl-L-homocysteine + H(+). Functionally, specifically methylates the N4 position of cytidine in position 1402 (C1402) of 16S rRNA. The chain is Ribosomal RNA small subunit methyltransferase H from Spiroplasma kunkelii.